A 227-amino-acid chain; its full sequence is uncharacterized protein (227 aa).

In terms of domain architecture, RCK N-terminal spans 3 to 119 (RADFCIIGLG…STMGIREALI (117 aa)). The RCK C-terminal domain occupies 134 to 221 (HGLENEIINL…LNKYLNYINP (88 aa)).

This is an uncharacterized protein from Mycoplasma genitalium (strain ATCC 33530 / DSM 19775 / NCTC 10195 / G37) (Mycoplasmoides genitalium).